The sequence spans 283 residues: Polyamine aminopropyltransferase (283 aa).

The 234-residue stretch at 5-238 folds into the PABS domain; that stretch reads TTWIDEYHKG…GIWSWTFASS (234 aa). Residue Gln32 participates in S-methyl-5'-thioadenosine binding. The spermidine site is built by His63 and Asp87. S-methyl-5'-thioadenosine is bound by residues Glu107 and 139–140; that span reads DG. Asp158 functions as the Proton acceptor in the catalytic mechanism. Spermidine is bound at residue 158–161; sequence DSSD.

The protein belongs to the spermidine/spermine synthase family. In terms of assembly, homodimer or homotetramer.

Its subcellular location is the cytoplasm. The enzyme catalyses S-adenosyl 3-(methylsulfanyl)propylamine + putrescine = S-methyl-5'-thioadenosine + spermidine + H(+). Its pathway is amine and polyamine biosynthesis; spermidine biosynthesis; spermidine from putrescine: step 1/1. In terms of biological role, catalyzes the irreversible transfer of a propylamine group from the amino donor S-adenosylmethioninamine (decarboxy-AdoMet) to putrescine (1,4-diaminobutane) to yield spermidine. The sequence is that of Polyamine aminopropyltransferase from Prochlorococcus marinus (strain MIT 9215).